We begin with the raw amino-acid sequence, 164 residues long: V-type proton ATPase subunit c' (164 aa).

At 1–14 (MSTQLASNIYAPLY) the chain is on the vacuolar side. The chain crosses the membrane as a helical span at residues 15–37 (APFFGFAGCAAAMVLSCLGAAIG). The Cytoplasmic portion of the chain corresponds to 38-59 (TAKSGIGIAGIGTFKPELIMKS). Residues 60-80 (LIPVVMSGILAIYGLVVAVLI) form a helical membrane-spanning segment. At 81 to 98 (AGNLSPTEDYTLFNGFMH) the chain is on the vacuolar side. A helical membrane pass occupies residues 99–120 (LSCGLCVGFACLSSGYAIGMVG). The Cytoplasmic segment spans residues 121–132 (DVGVRKYMHQPR). Residues 133 to 158 (LFVGIVLILIFSEVLGLYGMIVALIL) form a helical membrane-spanning segment. The Vacuolar portion of the chain corresponds to 159–164 (NTRGSE).

It belongs to the V-ATPase proteolipid subunit family. As to quaternary structure, V-ATPase is a heteromultimeric enzyme composed of a peripheral catalytic V1 complex (components A to H) attached to an integral membrane V0 proton pore complex (components: a, c, c', c'', d, e, f and VOA1). The decameric c-ring forms the proton-conducting pore, and is composed of eight proteolipid subunits c, one subunit c' and one subunit c''.

Its subcellular location is the vacuole membrane. Proton-conducting pore forming subunit of the V0 complex of vacuolar(H+)-ATPase (V-ATPase), a multisubunit enzyme composed of a peripheral complex (V1) that hydrolyzes ATP and a membrane integral complex (V0) that translocates protons. V-ATPase is responsible for acidifying and maintaining the pH of intracellular compartments. In Saccharomyces cerevisiae (strain ATCC 204508 / S288c) (Baker's yeast), this protein is V-type proton ATPase subunit c' (VMA11).